The primary structure comprises 572 residues: MRTSQYLLSTLKETPADAEVISHQLMLRAGMIRKLASGLYTWLPTGVRVLKKVENIVREEMNNAGAIEVLMPVVQPSELWQESGRWEQYGPELLRIADRGDRPFVLGPTHEEVITDLIRNELNSYKQLPLNFYQIQTKFRDEVRPRFGVMRSREFLMKDAYSFHTSQESLQETYDAMYTAYSKIFSRMGLDFRAVQADTGSIGGSASHEFQVLAQSGEDDVIFSDSSDYAANIEFAEAVAPKEPRAAATQEMTLVDTPNAKTIAELVEQFDLPIEKTVKTLLVKAVEGSASPLIALLVRGDHELNEVKAEKLPQVASPLTFATEEEIRALVKAGPGSLGPVNLPIPVVIDRTVAVMSDFAAGANIDGKHYFGINWDRDVATPEVADIRNVVAGDPSPDGKGTLLIKRGIEVGHIFQLGTKYSQAMNAAVQGEDGRNQILTMGCYGIGVTRVVAAAIEQNFDDRGIIWPDAIAPFQVAILPMNMHKSYRVQELAEKLYAELRAHGIDVLMDDRKERPGVMFADMELIGIPHTIVLGDRNLDNDDIEYKYRRNGEKQLIKTGDIVEYLVKAIKG.

The protein belongs to the class-II aminoacyl-tRNA synthetase family. ProS type 1 subfamily. As to quaternary structure, homodimer.

The protein resides in the cytoplasm. The enzyme catalyses tRNA(Pro) + L-proline + ATP = L-prolyl-tRNA(Pro) + AMP + diphosphate. In terms of biological role, catalyzes the attachment of proline to tRNA(Pro) in a two-step reaction: proline is first activated by ATP to form Pro-AMP and then transferred to the acceptor end of tRNA(Pro). As ProRS can inadvertently accommodate and process non-cognate amino acids such as alanine and cysteine, to avoid such errors it has two additional distinct editing activities against alanine. One activity is designated as 'pretransfer' editing and involves the tRNA(Pro)-independent hydrolysis of activated Ala-AMP. The other activity is designated 'posttransfer' editing and involves deacylation of mischarged Ala-tRNA(Pro). The misacylated Cys-tRNA(Pro) is not edited by ProRS. This Klebsiella pneumoniae (strain 342) protein is Proline--tRNA ligase.